Reading from the N-terminus, the 264-residue chain is General transcription factor IIF subunit 2 (264 aa).

It belongs to the TFIIF beta subunit family. As to quaternary structure, heterodimer of an alpha and a beta subunit.

It is found in the nucleus. Its function is as follows. TFIIF is a general transcription initiation factor that binds to RNA polymerase II and helps to recruit it to the initiation complex in collaboration with TFIIB. The protein is General transcription factor IIF subunit 2 (gtf2f2) of Xenopus laevis (African clawed frog).